Reading from the N-terminus, the 593-residue chain is Tectonic-1 (593 aa).

Residues 1 to 22 form the signal peptide; it reads MGSRGLPPLLLVLLNCYTSSST. The tract at residues 37-72 is disordered; that stretch reads KEDLNSTKATPTTLQPSLSPRTPGTPRAPERSGPRP. N-linked (GlcNAc...) asparagine glycosylation occurs at Asn-41. A compositionally biased stretch (polar residues) spans 42–58; the sequence is STKATPTTLQPSLSPRT. Asn-303 carries an N-linked (GlcNAc...) asparagine glycan. Residue Arg-486 is modified to Omega-N-methylarginine. N-linked (GlcNAc...) asparagine glycosylation is present at Asn-536.

Belongs to the tectonic family. Part of the tectonic-like complex (also named B9 complex).

It is found in the cytoplasm. It localises to the cytoskeleton. The protein resides in the cilium basal body. Its subcellular location is the secreted. Functionally, component of the tectonic-like complex, a complex localized at the transition zone of primary cilia and acting as a barrier that prevents diffusion of transmembrane proteins between the cilia and plasma membranes. Regulator of Hedgehog (Hh), required for both activation and inhibition of the Hh pathway in the patterning of the neural tube. During neural tube development, it is required for formation of the most ventral cell types and for full Hh pathway activation. Functions in Hh signal transduction to fully activate the pathway in the presence of high Hh levels and to repress the pathway in the absence of Hh signals. Modulates Hh signal transduction downstream of SMO and RAB23. This chain is Tectonic-1 (Tctn1), found in Mus musculus (Mouse).